The sequence spans 430 residues: Multisubstrate adapter protein soc-1 (430 aa).

The PH domain maps to 7–133 (NIILEGSLKR…WVNEICKLCK (127 aa)). Over residues 192-222 (SHNSLPSNPNYNNLPDPLESSRSETSSMYSS) the composition is skewed to low complexity. Disordered regions lie at residues 192–246 (SHNS…TRHT), 275–303 (EDAE…SEGF), and 315–377 (RRAP…RNLD). The segment covering 341 to 369 (RNLSRNGVNENGNYSATFSSRTSNYQQSE) has biased composition (polar residues).

Interacts (via C-terminus) with sem-5 (probably via SH3 domain 2). Interacts with nicotinic acetylcholine receptor. Post-translationally, may be phosphorylated.

Its function is as follows. Adapter protein which modulates signaling mediated by several receptor tyrosine kinases. Plays a role in fluid homeostasis, probably downstream of receptor egl-15 and upstream of let-60/Ras. Involved in nicotinic acetylcholine receptor (nAChR)-mediated sensitivity to nicotine and levamisole and gamma-aminobutyric acid (GABA)receptor-mediated sensitivity to muscimol. Regulates synaptic levels of nAchR receptor subunit lev-1 and unc-38, and GABA receptor subunit unc-49 in the nerve cord, probably downstream of egl-15. Regulates motility. During the formation of neuromuscular junctions at the larval stage, down-regulates membrane protrusion from body wall muscles, probably downstream of egl-15. Promotes vulva induction and down-regulates fertility, probably downstream of receptor let-23. Down-regulates daf-2-mediated repression of dauer formation and positively regulates daf-2-mediated aging. May be involved in the recruitment of phosphatase ptp-2 to egl-15. The polypeptide is Multisubstrate adapter protein soc-1 (Caenorhabditis elegans).